Reading from the N-terminus, the 886-residue chain is Alanine--tRNA ligase (886 aa).

Zn(2+)-binding residues include His568, His572, Cys670, and His674.

This sequence belongs to the class-II aminoacyl-tRNA synthetase family. It depends on Zn(2+) as a cofactor.

Its subcellular location is the cytoplasm. The enzyme catalyses tRNA(Ala) + L-alanine + ATP = L-alanyl-tRNA(Ala) + AMP + diphosphate. Catalyzes the attachment of alanine to tRNA(Ala) in a two-step reaction: alanine is first activated by ATP to form Ala-AMP and then transferred to the acceptor end of tRNA(Ala). Also edits incorrectly charged Ser-tRNA(Ala) and Gly-tRNA(Ala) via its editing domain. This chain is Alanine--tRNA ligase, found in Prochlorococcus marinus (strain NATL1A).